A 450-amino-acid chain; its full sequence is MTSWNFVCLSLGSNLGNRHEHIRRAYASLKKAGIRNLKSSVILETKALLLEGAPKEWDLPYFNSVVIGETQLSPDELIEEIKMIESRFGQDASLKWGPRPIDIDVLFYGDEAFSYHSDKCTIPHPKVLERPFLLSMIASLCPYRRFRLEGSSCNGKTFAELAAIYPLTEEDALGSFGSATQIMGIVNITDNSISDTGLFLEARRAAAHAERLFAEGASIIDLGAQATNPRVKDLGSVEQEWERLEPVLRLLAERWGAAQQCPDVSIDTFRPEIIRRAVEVFPIRWINDVSGGSLEMAHLAKEFGLRLLINHSCSLPPRPDCVLSYEESPIEQMLRWGESQLEQFAQVGLDTSWQVVFDPGIGFGKTPVQSMLLMDGVKQFKRVLECPVLIGHSRKSCLSMLGRFNSNDRDWETIGCSVSLHDRGVDYLRVHQVEGNRRALAAAAWAGMFV.

Residues 1-166 (MTSWNFVCLS…TFAELAAIYP (166 aa)) are HPPK. The Pterin-binding domain occupies 180–441 (TQIMGIVNIT…QVEGNRRALA (262 aa)). The DHPS stretch occupies residues 182–450 (IMGIVNITDN…AAAAWAGMFV (269 aa)). Position 187 (Asn187) interacts with Mg(2+). Residues Thr227, Asp267, Asn287, Asp358, Lys395, and 429–431 (RVH) each bind (7,8-dihydropterin-6-yl)methyl diphosphate.

This sequence in the C-terminal section; belongs to the DHPS family. In the N-terminal section; belongs to the HPPK family. The cofactor is Mg(2+).

It catalyses the reaction 6-hydroxymethyl-7,8-dihydropterin + ATP = (7,8-dihydropterin-6-yl)methyl diphosphate + AMP + H(+). The catalysed reaction is (7,8-dihydropterin-6-yl)methyl diphosphate + 4-aminobenzoate = 7,8-dihydropteroate + diphosphate. Its pathway is cofactor biosynthesis; tetrahydrofolate biosynthesis; 2-amino-4-hydroxy-6-hydroxymethyl-7,8-dihydropteridine diphosphate from 7,8-dihydroneopterin triphosphate: step 4/4. It participates in cofactor biosynthesis; tetrahydrofolate biosynthesis; 7,8-dihydrofolate from 2-amino-4-hydroxy-6-hydroxymethyl-7,8-dihydropteridine diphosphate and 4-aminobenzoate: step 1/2. The sequence is that of Folate synthesis bifunctional protein (folKP) from Chlamydia trachomatis serovar D (strain ATCC VR-885 / DSM 19411 / UW-3/Cx).